Here is a 523-residue protein sequence, read N- to C-terminus: Endoglucanase 19 (523 aa).

Positions 1 to 52 are cleaved as a signal peptide; the sequence is MCSWSLSSHTLTSPVRQAAMEPKSSSCGGAGIRLRLLVVLHLLLLVPSSAMA. Aspartate 107 functions as the Nucleophile in the catalytic mechanism. Asparagine 279 carries N-linked (GlcNAc...) asparagine glycosylation. Residues histidine 442, aspartate 493, and glutamate 502 contribute to the active site.

It belongs to the glycosyl hydrolase 9 (cellulase E) family.

It is found in the secreted. The enzyme catalyses Endohydrolysis of (1-&gt;4)-beta-D-glucosidic linkages in cellulose, lichenin and cereal beta-D-glucans.. This Oryza sativa subsp. japonica (Rice) protein is Endoglucanase 19.